Consider the following 487-residue polypeptide: Pentatricopeptide repeat-containing protein At5g61370, mitochondrial (487 aa).

The N-terminal 90 residues, 1–90 (MMSTTVRLNR…TSPRRLLRFF (90 aa)), are a transit peptide targeting the mitochondrion. PPR repeat units lie at residues 137–171 (DKQT…SCPQ), 172–202 (DGFT…HKDV), 207–241 (ELSV…GITP), 242–283 (DLFC…KIQP), 284–318 (TSMS…GCDP), 319–353 (DTGS…GFRP), 354–388 (ERKF…SVGG), and 389–423 (YGQV…DVTL). The segment at 466–487 (TKPKLKLKPKRRSKTKKKNLQH) is disordered.

It belongs to the PPR family. P subfamily.

Its subcellular location is the mitochondrion. The protein is Pentatricopeptide repeat-containing protein At5g61370, mitochondrial of Arabidopsis thaliana (Mouse-ear cress).